We begin with the raw amino-acid sequence, 271 residues long: MLKIGVIGCGFIGGQICRAIDKGVINAELYALSDSSESKVLELTTCLKRYSPASMTIEELLQNVDFVIESASQKAVRLIVPQALEAGRDVMVMSVGALADEELRKRLFRLAEQNNCKLYFPSGAVAGIDGINSASAAEILSVTLTTRKPPMGLAGAPHVEALGIELETIEKETLLFEGPASEAVKAFPANVNVAATISLAGIGFERTKVRVIADPTLSRNVHEITVEGEFGKLSTRVENLPSPENPKTSYLAALSAISTLKKILSPVQIGT.

2 residues coordinate NAD(+): Ala-124 and Asn-192. Residue His-222 is part of the active site.

It belongs to the L-aspartate dehydrogenase family.

It catalyses the reaction L-aspartate + NADP(+) + H2O = oxaloacetate + NH4(+) + NADPH + H(+). The catalysed reaction is L-aspartate + NAD(+) + H2O = oxaloacetate + NH4(+) + NADH + H(+). Its pathway is cofactor biosynthesis; NAD(+) biosynthesis; iminoaspartate from L-aspartate (dehydrogenase route): step 1/1. Its function is as follows. Specifically catalyzes the NAD or NADP-dependent dehydrogenation of L-aspartate to iminoaspartate. In Methanosarcina barkeri (strain Fusaro / DSM 804), this protein is L-aspartate dehydrogenase.